The following is a 686-amino-acid chain: Amphiphysin (686 aa).

2 coiled-coil regions span residues 10-83 (AKNV…SLHE) and 144-191 (DYDS…QEEL). Residues 24 to 240 (VLQKLGKADE…MTKLGDQHAD (217 aa)) enclose the BAR domain. 3 disordered regions span residues 244–314 (SIQG…PTKE), 421–441 (AETEQALPTEPQAEEPPATAA), and 483–597 (VEEA…AGAV). Ser252 is subject to Phosphoserine. Thr260 is modified (phosphothreonine). Pro residues predominate over residues 261-274 (PSPPEEPSPLPSPT). A phosphoserine mark is found at Ser262, Ser268, Ser272, and Ser276. At Thr280 the chain carries Phosphothreonine. A compositionally biased stretch (low complexity) spans 424–441 (EQALPTEPQAEEPPATAA). Position 500 is a phosphoserine (Ser500). Residues 541 to 562 (SNHEGEGEHQETATGTEPREAA) show a composition bias toward basic and acidic residues. The SH3 domain maps to 613–686 (GFLYKVETLH…FPENFTRRLE (74 aa)). The residue at position 629 (Ser629) is a Phosphoserine.

In terms of assembly, heterodimer with BIN1. Binds SH3GLB1. Interacts with REPS1 and SGIP1. Binds AP2A2. Interacts with AP2B1. Interacts with DNM1 and SYNJ1.

The protein localises to the cytoplasmic vesicle. Its subcellular location is the secretory vesicle. It localises to the synaptic vesicle membrane. The protein resides in the cytoplasm. It is found in the cytoskeleton. Its function is as follows. May participate in mechanisms of regulated exocytosis in synapses and certain endocrine cell types. May control the properties of the membrane associated cytoskeleton. The sequence is that of Amphiphysin (Amph) from Mus musculus (Mouse).